The following is a 150-amino-acid chain: 3-dehydroquinate dehydratase (150 aa).

The active-site Proton acceptor is the Tyr26. Positions 77, 83, and 90 each coordinate substrate. His103 (proton donor) is an active-site residue. Substrate is bound by residues 104–105 (LS) and Arg114.

The protein belongs to the type-II 3-dehydroquinase family. Homododecamer.

The enzyme catalyses 3-dehydroquinate = 3-dehydroshikimate + H2O. Its pathway is metabolic intermediate biosynthesis; chorismate biosynthesis; chorismate from D-erythrose 4-phosphate and phosphoenolpyruvate: step 3/7. Its function is as follows. Catalyzes a trans-dehydration via an enolate intermediate. This is 3-dehydroquinate dehydratase from Citrobacter koseri (strain ATCC BAA-895 / CDC 4225-83 / SGSC4696).